A 448-amino-acid chain; its full sequence is C4-dicarboxylate transport protein (448 aa).

8 consecutive transmembrane segments (helical) span residues 20–38, 53–75, 88–110, 161–178, 199–220, 230–252, 325–347, and 362–384; these read LYFQ…GHFY, IRLV…IAGM, AMIY…ANTV, ILQV…LGIV, LVAI…FTIG, LAML…LGAV, LFIA…LLVA, and FITL…ALIL.

Belongs to the dicarboxylate/amino acid:cation symporter (DAACS) (TC 2.A.23) family.

It localises to the cell inner membrane. Responsible for the transport of dicarboxylates such as succinate, fumarate, and malate from the periplasm across the membrane. This Agrobacterium fabrum (strain C58 / ATCC 33970) (Agrobacterium tumefaciens (strain C58)) protein is C4-dicarboxylate transport protein.